We begin with the raw amino-acid sequence, 284 residues long: MSVPLLEFHQVGFRYPNTPEPVLRDCSFTLEAGRKVALLGLNGSGKSTLFYLAAALYRRDRGEIYCQGQRLVHQPQRLRQWRQRIGLAFQDPEQQLVAATVAEDISYGLCNLGLSPPEVAARLHQTLQEFDLVALADRPLHHLSLGQKRRVALAGVMALAPTLLLLDEPTTYLDYQQRQQLRELLEKIHQQGTTIVIATHDLDFAYGWADWIMILVNGQVSVSDRASHVFGQWPTFAPELGTPTLLGLWQQLPPAWRQHRPFPRTVTEFSRELGERFRHLGDEC.

An ABC transporter domain is found at 6–242 (LEFHQVGFRY…WPTFAPELGT (237 aa)). An ATP-binding site is contributed by 40–47 (GLNGSGKS).

This sequence belongs to the ABC transporter superfamily.

The protein localises to the cell inner membrane. Functionally, probably part of an ABC transporter complex. Responsible for energy coupling to the transport system. This Thermosynechococcus vestitus (strain NIES-2133 / IAM M-273 / BP-1) protein is Putative ABC transporter ATP-binding protein tll2439.